Here is a 231-residue protein sequence, read N- to C-terminus: NADH-ubiquinone oxidoreductase chain 4 (231 aa).

The next 6 membrane-spanning stretches (helical) occupy residues 1-21 (PIAG…YGII), 34-54 (MFLP…LTCL), 63-85 (IAYS…TPWG), 89-111 (AMAL…NTTY), 128-148 (ILPM…AIPP), and 169-189 (TIIL…HMLL).

Belongs to the complex I subunit 4 family.

The protein resides in the mitochondrion membrane. The catalysed reaction is a ubiquinone + NADH + 5 H(+)(in) = a ubiquinol + NAD(+) + 4 H(+)(out). Its function is as follows. Core subunit of the mitochondrial membrane respiratory chain NADH dehydrogenase (Complex I) that is believed to belong to the minimal assembly required for catalysis. Complex I functions in the transfer of electrons from NADH to the respiratory chain. The immediate electron acceptor for the enzyme is believed to be ubiquinone. The protein is NADH-ubiquinone oxidoreductase chain 4 (MT-ND4) of Bothrops bilineatus (Green jararaca).